Consider the following 196-residue polypeptide: MAEQKRNRREEILQALAAMLETSPGQRITTAKLAANLGVSEAALYRHFPSKARMFEGLIEFVEDTLLTRINMIMDEEKNTLSRCHAILQLLLTFAERNPGITRVMTGDALMGEHDRLRGRMEDLFNRIESSIKQILREKAMREQQRFIVDEAVLANLLLSYADGKISQFVRSNFKRLPTEHFSAQWQVMEQQLISA.

The region spanning 6 to 66 (RNRREEILQA…GLIEFVEDTL (61 aa)) is the HTH tetR-type domain. A DNA-binding region (H-T-H motif) is located at residues 29–48 (TTAKLAANLGVSEAALYRHF). A coiled-coil region spans residues 108 to 135 (DALMGEHDRLRGRMEDLFNRIESSIKQI).

It belongs to the nucleoid occlusion factor SlmA family. In terms of assembly, homodimer. Interacts with FtsZ.

It is found in the cytoplasm. It localises to the nucleoid. Required for nucleoid occlusion (NO) phenomenon, which prevents Z-ring formation and cell division over the nucleoid. Acts as a DNA-associated cell division inhibitor that binds simultaneously chromosomal DNA and FtsZ, and disrupts the assembly of FtsZ polymers. SlmA-DNA-binding sequences (SBS) are dispersed on non-Ter regions of the chromosome, preventing FtsZ polymerization at these regions. This chain is Nucleoid occlusion factor SlmA, found in Idiomarina loihiensis (strain ATCC BAA-735 / DSM 15497 / L2-TR).